Here is a 97-residue protein sequence, read N- to C-terminus: Putative pterin-4-alpha-carbinolamine dehydratase (97 aa).

It belongs to the pterin-4-alpha-carbinolamine dehydratase family.

It carries out the reaction (4aS,6R)-4a-hydroxy-L-erythro-5,6,7,8-tetrahydrobiopterin = (6R)-L-erythro-6,7-dihydrobiopterin + H2O. In Cyanothece sp. (strain PCC 7425 / ATCC 29141), this protein is Putative pterin-4-alpha-carbinolamine dehydratase.